The primary structure comprises 418 residues: Serine hydroxymethyltransferase (418 aa).

Residues Leu121 and 125-127 (GHL) contribute to the (6S)-5,6,7,8-tetrahydrofolate site. Position 230 is an N6-(pyridoxal phosphate)lysine (Lys230). Residue 356–358 (SPF) participates in (6S)-5,6,7,8-tetrahydrofolate binding.

It belongs to the SHMT family. As to quaternary structure, homodimer. The cofactor is pyridoxal 5'-phosphate.

It is found in the cytoplasm. It catalyses the reaction (6R)-5,10-methylene-5,6,7,8-tetrahydrofolate + glycine + H2O = (6S)-5,6,7,8-tetrahydrofolate + L-serine. It participates in one-carbon metabolism; tetrahydrofolate interconversion. It functions in the pathway amino-acid biosynthesis; glycine biosynthesis; glycine from L-serine: step 1/1. Functionally, catalyzes the reversible interconversion of serine and glycine with tetrahydrofolate (THF) serving as the one-carbon carrier. This reaction serves as the major source of one-carbon groups required for the biosynthesis of purines, thymidylate, methionine, and other important biomolecules. Also exhibits THF-independent aldolase activity toward beta-hydroxyamino acids, producing glycine and aldehydes, via a retro-aldol mechanism. This chain is Serine hydroxymethyltransferase, found in Shewanella halifaxensis (strain HAW-EB4).